Consider the following 407-residue polypeptide: Argininosuccinate synthase (407 aa).

Residues 12-20 (AYSGGLDTS) and A39 each bind ATP. Residues Y92 and S97 each contribute to the L-citrulline site. Residue G122 coordinates ATP. L-aspartate-binding residues include T124, N128, and D129. N128 is an L-citrulline binding site. 5 residues coordinate L-citrulline: R132, S182, S191, E267, and Y279.

Belongs to the argininosuccinate synthase family. Type 1 subfamily. Homotetramer.

The protein resides in the cytoplasm. The catalysed reaction is L-citrulline + L-aspartate + ATP = 2-(N(omega)-L-arginino)succinate + AMP + diphosphate + H(+). It participates in amino-acid biosynthesis; L-arginine biosynthesis; L-arginine from L-ornithine and carbamoyl phosphate: step 2/3. This chain is Argininosuccinate synthase, found in Campylobacter fetus subsp. fetus (strain 82-40).